A 374-amino-acid chain; its full sequence is Chaperone protein DnaJ (374 aa).

In terms of domain architecture, J spans 5–71 (DLYAILGVCR…QKRASYDRFG (67 aa)). The CR-type zinc finger occupies 132-210 (GVEKQIRIAT…CQGTGRVKDT (79 aa)). Zn(2+) contacts are provided by Cys145, Cys148, Cys162, Cys165, Cys184, Cys187, Cys198, and Cys201. 4 CXXCXGXG motif repeats span residues 145–152 (CGECHGSG), 162–169 (CPTCNGAG), 184–191 (CPTCHGRG), and 198–205 (CNKCQGTG).

Belongs to the DnaJ family. Homodimer. The cofactor is Zn(2+).

The protein localises to the cytoplasm. Participates actively in the response to hyperosmotic and heat shock by preventing the aggregation of stress-denatured proteins and by disaggregating proteins, also in an autonomous, DnaK-independent fashion. Unfolded proteins bind initially to DnaJ; upon interaction with the DnaJ-bound protein, DnaK hydrolyzes its bound ATP, resulting in the formation of a stable complex. GrpE releases ADP from DnaK; ATP binding to DnaK triggers the release of the substrate protein, thus completing the reaction cycle. Several rounds of ATP-dependent interactions between DnaJ, DnaK and GrpE are required for fully efficient folding. Also involved, together with DnaK and GrpE, in the DNA replication of plasmids through activation of initiation proteins. This chain is Chaperone protein DnaJ, found in Dichelobacter nodosus (strain VCS1703A).